Reading from the N-terminus, the 425-residue chain is MTIASERICNSENNLKSCDNEVYLSIEKELQRQRSQLQLIASENFASKAVMEAQGSFLTNKYAEGYPGKRYYCGCEYVDEVENLAIERLCKLFNVKFANVQPHSGSQANQAVFASLLTPGDTILGLSLNCGGHLTHGAAPNLSGKWFKSIQYTVNRDTYLLDMDEVERLALEHKPKLIIAGASAYPRKIDFERFREIANKVGAYLLADIAHYSGLIAAGCYPSPAEYAHIITSTTHKTLRGPRGGVVMTNDEALHKKIQSAVFPGLQGGPLMHVIAAKAVAFKEALAPEFKTYSKKVVENAKVLAQALQGHGLNIITGGTDSHIVLVDLRSQKLKGKDVVNSLERAGITCNKNSVPFDTEKPTITSGLRFGTAAETTRGLEKKDFKEIADLINEIIQGLIDGNSPDVEKAVKNKVESICSNFPIY.

Residues Leu128 and 132-134 (GHL) contribute to the (6S)-5,6,7,8-tetrahydrofolate site. Position 237 is an N6-(pyridoxal phosphate)lysine (Lys237).

The protein belongs to the SHMT family. As to quaternary structure, homodimer. It depends on pyridoxal 5'-phosphate as a cofactor.

It is found in the cytoplasm. The catalysed reaction is (6R)-5,10-methylene-5,6,7,8-tetrahydrofolate + glycine + H2O = (6S)-5,6,7,8-tetrahydrofolate + L-serine. The protein operates within one-carbon metabolism; tetrahydrofolate interconversion. Its pathway is amino-acid biosynthesis; glycine biosynthesis; glycine from L-serine: step 1/1. Its function is as follows. Catalyzes the reversible interconversion of serine and glycine with tetrahydrofolate (THF) serving as the one-carbon carrier. This reaction serves as the major source of one-carbon groups required for the biosynthesis of purines, thymidylate, methionine, and other important biomolecules. Also exhibits THF-independent aldolase activity toward beta-hydroxyamino acids, producing glycine and aldehydes, via a retro-aldol mechanism. The protein is Serine hydroxymethyltransferase of Wolbachia pipientis subsp. Culex pipiens (strain wPip).